A 333-amino-acid polypeptide reads, in one-letter code: Adenosine deaminase (333 aa).

Residues H12 and H14 each coordinate Zn(2+). Residues H14, D16, and G170 each contribute to the substrate site. Residue H197 participates in Zn(2+) binding. E200 functions as the Proton donor in the catalytic mechanism. D278 lines the Zn(2+) pocket. Substrate is bound at residue D279.

Belongs to the metallo-dependent hydrolases superfamily. Adenosine and AMP deaminases family. Adenosine deaminase subfamily. It depends on Zn(2+) as a cofactor.

The enzyme catalyses adenosine + H2O + H(+) = inosine + NH4(+). The catalysed reaction is 2'-deoxyadenosine + H2O + H(+) = 2'-deoxyinosine + NH4(+). Its function is as follows. Catalyzes the hydrolytic deamination of adenosine and 2-deoxyadenosine. The protein is Adenosine deaminase of Salmonella schwarzengrund (strain CVM19633).